Consider the following 352-residue polypeptide: MSSQLALRGPELSANLCKPEEDTLRVLVTGGSGNVGVGVVRALNAARHHVVVASRGYSPALLPEGVRAVRLERTEPDAYTRLVAAEKPDAVIDLTCHDAADAAVTLRACAGVDRVVVVSSVTAAGPATTTPVTEATAAPPLSEYGIDKLAVEETVRAAWADGTSQALLVRLGAVYRLGADLDGQLAEDGCWLAHAAAGAPAVLADDGAARWNLLHADDAGAALAELLANDRARGVLVHLASRHPLPWRELYERVHHALGRPFNPVSVPAEWAAEQLEDAEFLAETSRWDQVFDLGLLDRLAPSYQERGGPSRVTEVALWLIRQGRVGDAELGAEIQELPARLAAVRTAPGLV.

Belongs to the NAD(P)-dependent epimerase/dehydratase family.

It carries out the reaction 2'-dehydrokanamycin A + NADPH + H(+) = kanamycin A + NADP(+). It participates in antibiotic biosynthesis; kanamycin biosynthesis. Mediates the conversion of 2'-dehydrokanamycin A into kanamycin A. The polypeptide is 2'-dehydrokanamycin reductase (kanK) (Streptomyces kanamyceticus).